Here is a 146-residue protein sequence, read N- to C-terminus: D-aminoacyl-tRNA deacylase (146 aa).

A Gly-cisPro motif, important for rejection of L-amino acids motif is present at residues 137 to 138 (GP).

It belongs to the DTD family. As to quaternary structure, homodimer.

It is found in the cytoplasm. It carries out the reaction glycyl-tRNA(Ala) + H2O = tRNA(Ala) + glycine + H(+). The catalysed reaction is a D-aminoacyl-tRNA + H2O = a tRNA + a D-alpha-amino acid + H(+). Functionally, an aminoacyl-tRNA editing enzyme that deacylates mischarged D-aminoacyl-tRNAs. Also deacylates mischarged glycyl-tRNA(Ala), protecting cells against glycine mischarging by AlaRS. Acts via tRNA-based rather than protein-based catalysis; rejects L-amino acids rather than detecting D-amino acids in the active site. By recycling D-aminoacyl-tRNA to D-amino acids and free tRNA molecules, this enzyme counteracts the toxicity associated with the formation of D-aminoacyl-tRNA entities in vivo and helps enforce protein L-homochirality. This is D-aminoacyl-tRNA deacylase from Bacillus mycoides (strain KBAB4) (Bacillus weihenstephanensis).